The following is a 356-amino-acid chain: Nicotinate-nucleotide--dimethylbenzimidazole phosphoribosyltransferase (356 aa).

Residue E317 is the Proton acceptor of the active site.

Belongs to the CobT family. As to quaternary structure, homodimer.

The catalysed reaction is 5,6-dimethylbenzimidazole + nicotinate beta-D-ribonucleotide = alpha-ribazole 5'-phosphate + nicotinate + H(+). It participates in nucleoside biosynthesis; alpha-ribazole biosynthesis; alpha-ribazole from 5,6-dimethylbenzimidazole: step 1/2. Its function is as follows. Catalyzes the synthesis of alpha-ribazole-5'-phosphate from nicotinate mononucleotide (NAMN) and 5,6-dimethylbenzimidazole (DMB). This is Nicotinate-nucleotide--dimethylbenzimidazole phosphoribosyltransferase from Salmonella schwarzengrund (strain CVM19633).